The primary structure comprises 1237 residues: Cilia- and flagella-associated protein 61 (1237 aa).

Residues 278 to 301 are disordered; it reads QDLSVRRSQDAELRSSSQGSQKIV. Residues 281–290 show a composition bias toward basic and acidic residues; it reads SVRRSQDAEL.

As to quaternary structure, component of axonemal radial spokes, the protein complexes that link the outer microtubule doublets with the central pair of microtubules. Interacts with CFAP91/MAATS1, ODAD2/ARMC4, RSPH3A, ROPN1, ROPN1L and RSPH9. Interacts with DYNLT1, DYNC1I2 and TUBB3. Interacts with WDR35, IFT22 and IFT81.

It localises to the cytoplasm. It is found in the cytoskeleton. Its subcellular location is the flagellum axoneme. Its function is as follows. Involved in sperm flagellum assembly. Plays an essential role in the formation of the radial spokes in flagellum axoneme. This Homo sapiens (Human) protein is Cilia- and flagella-associated protein 61.